We begin with the raw amino-acid sequence, 342 residues long: Delta(6)-protoilludene synthase (342 aa).

Mg(2+)-binding residues include Asp81, Asn217, Ser221, and Glu225. Positions 81 to 85 match the DDXXD motif motif; that stretch reads DEYSD. Positions 306 and 307 each coordinate (2E,6E)-farnesyl diphosphate.

The protein belongs to the terpene synthase family. Mg(2+) is required as a cofactor.

It carries out the reaction (2E,6E)-farnesyl diphosphate = Delta(6)-protoilludene + diphosphate. In terms of biological role, delta(6)-protoilludene synthase, part of the gene cluster that mediates the biosynthesis of melleolides, a range of antifungal and phytotoxic polyketide derivatives composed of an orsellinic acid (OA) moiety esterified to various sesquiterpene alcohols. The first step in melleolides biosynthesis is performed by the delta(6)-protoilludene synthase PRO1 which catalyzes the cyclization of farnesyl diphosphate to protoilludene. The orsellinic acid synthase armB produces OA by condensing acetyl-CoA with 3 malonyl-CoA units in a three-round chain elongation reaction folowed by a C2-C7 ring closure. ArmB further catalyzes the trans-esterification of OA to the various sesquiterpene alcohols resulting from the hydroxylation of protoilludene. The melleolides cluster also includes 5 cytochrome P450 monooxygenases, 4 NAD(+)-dependent oxidoreductases, one flavin-dependent oxidoreductase, and one O-methyltransferase. The cytochrome P450 monooxygenases may be involved in protoilludene hydroxylation to elaborate melleolides with multiple alcohol groups, such as melleolide D, which carries alcohol functionalities at C-4, C-5, C-10, and C-13. The role of the NAD(+)-dependent enzymes remains unknown. Numerous melleolides, including arnamial, show 5'-O-methylation of the aromatic moiety which may be catalyzed by the methyltransferase encoded in the cluster. The flavin-dependent oxidoreductase might represent the dehydrogenase yielding the aldehyde in position 1 of arnamial and other melleolides. Finally, several halogenases, localized outside of the cluster, are able to catalyze the transfer of a single chlorine atom to the melleolide backbone, resulting in a 6'-chloromelleolide product. The chain is Delta(6)-protoilludene synthase from Armillaria ostoyae (Armillaria root rot fungus).